The sequence spans 872 residues: Serine/threonine-protein phosphatase 1 regulatory subunit 10 (872 aa).

Positions 1–348 (MGSGPIDPKE…EPAAPAEPMD (348 aa)) are interaction with TOX4. The 75-residue stretch at 73 to 147 (KLLNSWLTYS…SDWMAVIRSQ (75 aa)) folds into the TFIIS N-terminal domain. Disordered stretches follow at residues 147-213 (QSST…STGL), 247-270 (SATA…NTTP), 307-398 (KKKK…KRKT), and 534-837 (VETL…HGGD). 2 stretches are compositionally biased toward basic and acidic residues: residues 153–166 (AEKD…EGKS) and 174–196 (PLTE…EKPK). A Glycyl lysine isopeptide (Lys-Gly) (interchain with G-Cter in SUMO2) cross-link involves residue lysine 179. The segment covering 248–258 (ATAAPGDAAPP) has biased composition (low complexity). Lysine 262 participates in a covalent cross-link: Glycyl lysine isopeptide (Lys-Gly) (interchain with G-Cter in SUMO2). Phosphoserine is present on serine 313. The segment covering 325–336 (KTSTEPSTAKPS) has biased composition (low complexity). A necessary for interaction with PPP1CA region spans residues 357–433 (PAVEVPELMD…NKIKDFGEAA (77 aa)). Serine 382 carries the phosphoserine modification. A necessary for interaction with PPP1CC region spans residues 393-408 (GRKRKTVTWPEEGKLR). The PP1-binding motif motif lies at 394-423 (RKRKTVTWPEEGKLREYFYFELDETERVNV). At threonine 398 the chain carries Phosphothreonine; by PKA. Residues 418 to 619 (TERVNVNKIK…LKQMLVPHGL (202 aa)) are interaction with WDR82. The span at 540–551 (GGSGGSPDGAGG) shows a compositional bias: gly residues. Phosphoserine occurs at positions 545 and 591. Residues 583-595 (EILTSIMGSPNNH) show a composition bias toward polar residues. Residues 596–611 (PSEELLKQPDYSDKLK) are compositionally biased toward basic and acidic residues. Positions 644–655 (PPGPGGPMPGPH) are enriched in pro residues. Arginine 665 bears the Omega-N-methylarginine mark. Residues 674–690 (RGGDPFWDGPGDPMRGG) are compositionally biased toward low complexity. Omega-N-methylarginine is present on residues arginine 693 and arginine 737. Positions 724–762 (ARGGRSGGGPPNGRGGPGGGGMVGGGGHRPHEGPGGSMG) are enriched in gly residues. Over residues 795-835 (PHDVPSHRGHDHRGPPPHEHRGHDGHGGGGHRGHDGGHSHG) the composition is skewed to basic and acidic residues. The C3H1-type zinc finger occupies 838–866 (MSNRPVCRHFMMKGNCRYENNCAFYHPGV).

In terms of assembly, component of the PNUTS-PP1 complex (also named PTW/PP1 complex), composed of PPP1R10/PNUTS, TOX4, WDR82, and PPP1CA (or PPP1CB or PPP1CC). In terms of processing, phosphorylated on Thr-398 by PKA within the region necessary for interaction with PPP1CA. In terms of tissue distribution, expressed in testis, brain and intestine (at protein level). Highly expressed in testis.

Its subcellular location is the nucleus. It is found in the chromosome. In terms of biological role, substrate-recognition component of the PNUTS-PP1 protein phosphatase complex, a protein phosphatase 1 (PP1) complex that promotes RNA polymerase II transcription pause-release, allowing transcription elongation. Promoter-proximal pausing by RNA polymerase II is a transcription halt following transcription initiation but prior to elongation, which acts as a checkpoint to control that transcripts are favorably configured for transcriptional elongation. The PNUTS-PP1 complex mediates the release of RNA polymerase II from promoter-proximal region of genes by catalyzing dephosphorylation of proteins involved in transcription, such as AFF4, CDK9, MEPCE, INTS12, NCBP1, POLR2M/GDOWN1 and SUPT6H. The PNUTS-PP1 complex also regulates RNA polymerase II transcription termination by mediating dephosphorylation of SUPT5H in termination zones downstream of poly(A) sites, thereby promoting deceleration of RNA polymerase II transcription. PNUTS-PP1 complex is also involved in the response to replication stress by mediating dephosphorylation of POLR2A at 'Ser-5' of the CTD, promoting RNA polymerase II degradation. The PNUTS-PP1 complex also plays a role in the control of chromatin structure and cell cycle progression during the transition from mitosis into interphase. PNUTS-PP1 complex mediates dephosphorylation of MYC, promoting MYC stability by preventing MYC ubiquitination by the SCF(FBXW7) complex. In addition to acts as a substrate-recognition component, PPP1R10/PNUTS also acts as a nuclear targeting subunit for the PNUTS-PP1 complex. In some context, PPP1R10/PNUTS also acts as an inhibitor of protein phosphatase 1 (PP1) activity by preventing access to substrates. The sequence is that of Serine/threonine-protein phosphatase 1 regulatory subunit 10 from Rattus norvegicus (Rat).